The sequence spans 368 residues: MSETAKKVIVGMSGGVDSSVSAWLLQQQGYQVEGLFMKNWEEDDGEEYCTAAADLADAQAVCDKLGIELHTVNFAAEYWDNVFELFLAEYKAGRTPNPDILCNKEIKFKAFLEFAAEDLGADYIATGHYVRRADVDGKSRLLRGLDSNKDQSYFLYTLSHEQIAQSLFPVGELEKPQVRKIAEDLGLVTAKKKDSTGICFIGERKFREFLGRYLPAQPGKIITVDGDEIGEHQGLMYHTLGQRKGLGIGGTKEGTEEPWYVVDKDVENNILVVAQGHEHPRLMSVGLIAQQLHWVDREPFTGTMRCSVKTRYRQTDIPCTVKALDDDRIEVIFDEPVAAVTPGQSAVFYNGEVCLGGGIIEQRLPLPV.

Residues Gly-11–Ser-18 and Met-37 contribute to the ATP site. The interval Asn-97–Asp-99 is interaction with target base in tRNA. Catalysis depends on Cys-102, which acts as the Nucleophile. An intrachain disulfide couples Cys-102 to Cys-199. Residue Gly-127 coordinates ATP. The interval Lys-149–Gln-151 is interaction with tRNA. The active-site Cysteine persulfide intermediate is Cys-199. The interaction with tRNA stretch occupies residues Arg-311–Tyr-312.

The protein belongs to the MnmA/TRMU family. As to quaternary structure, interacts with TusE.

It is found in the cytoplasm. It catalyses the reaction S-sulfanyl-L-cysteinyl-[protein] + uridine(34) in tRNA + AH2 + ATP = 2-thiouridine(34) in tRNA + L-cysteinyl-[protein] + A + AMP + diphosphate + H(+). Catalyzes the 2-thiolation of uridine at the wobble position (U34) of tRNA(Lys), tRNA(Glu) and tRNA(Gln), leading to the formation of s(2)U34, the first step of tRNA-mnm(5)s(2)U34 synthesis. Sulfur is provided by IscS, via a sulfur-relay system. Binds ATP and its substrate tRNAs. The protein is tRNA-specific 2-thiouridylase MnmA of Shigella boydii serotype 4 (strain Sb227).